Reading from the N-terminus, the 430-residue chain is Mucorpepsin (430 aa).

An N-terminal signal peptide occupies residues 1–22; it reads MLFSQITSAILLTAASLSLTTA. The propeptide at 23-69 is activation peptide; the sequence is RPVSKQSESKDKLLALPLTSVSRKFSQTKFGQQQLAEKLAGLKPFSE. The Peptidase A1 domain maps to 89 to 421; the sequence is YAIPVSIGTP…DFGNNRIGFA (333 aa). D107 is an active-site residue. C120 and C126 are oxidised to a cystine. 2 N-linked (GlcNAc...) asparagine glycosylation sites follow: N148 and N257. Residue D306 is part of the active site. A disulfide bridge connects residues C341 and C385.

The protein belongs to the peptidase A1 family.

It catalyses the reaction Hydrolysis of proteins, favoring hydrophobic residues at P1 and P1'. Clots milk. Does not accept Lys at P1, and hence does not activate trypsinogen.. In terms of biological role, this enzyme, capable of clotting milk is frequently used for cheese production. This Rhizomucor miehei protein is Mucorpepsin.